The following is a 295-amino-acid chain: MPTNEQRRATAKRKLKRQLERRAKQARWRRVLLISGGVVVAVAVIITVVATVVISKLGHKHDTASSTASNSLTATKTPAVTPSVLPLPSFQPSTNLGVNCQYPPSADKAAKPVKPPRAGKVPTDPATVSASMATNQGNIGLLLNNAESPCTVNSFASLTGQGFFNNTKCHRLTTSLMLGVLQCGDPKVDGTGGPGYKFANEYPTDQYPPNDPKLKQPVLYPRGTLAMANSGPNTNGSQFFLVYHDSQLPPEYTVFGTIQADGLATLDKIAKGGIASGGDDGPPATEVTIESLRLD.

Disordered regions lie at residues 105 to 128 (SADK…PATV) and 274 to 295 (IASG…LRLD). Residues 126–294 (ATVSASMATN…TEVTIESLRL (169 aa)) enclose the PPIase cyclophilin-type domain.

Belongs to the cyclophilin-type PPIase family.

It carries out the reaction [protein]-peptidylproline (omega=180) = [protein]-peptidylproline (omega=0). Functionally, PPIases accelerate the folding of proteins. It catalyzes the cis-trans isomerization of proline imidic peptide bonds in oligopeptides. The sequence is that of Probable peptidyl-prolyl cis-trans isomerase B (ppiB) from Mycobacterium leprae (strain TN).